The following is a 127-amino-acid chain: uncharacterized protein (127 aa).

This sequence belongs to the transcriptional regulatory CopG/NikR family.

This is an uncharacterized protein from Methanocaldococcus jannaschii (strain ATCC 43067 / DSM 2661 / JAL-1 / JCM 10045 / NBRC 100440) (Methanococcus jannaschii).